The chain runs to 195 residues: MNLIPTVIEQTNRGERAYDIYSRLLKDRIIMLGSGVDDNVANSIVAQMLFLQAEDPEKDISLYINSPGGSITAGMAIYDTMQFIKPDVSTICIGMAASMGAFLLTAGAKGKRMALPNSEVMIHQPLGGMQGQAADMEIHARRIIQMREKLNQIMAERSGQPYERIARDTDRDNFMTAEQAKEYGLIDKVIETPTK.

Ser98 (nucleophile) is an active-site residue. His123 is an active-site residue.

This sequence belongs to the peptidase S14 family. Fourteen ClpP subunits assemble into 2 heptameric rings which stack back to back to give a disk-like structure with a central cavity, resembling the structure of eukaryotic proteasomes.

Its subcellular location is the cytoplasm. The enzyme catalyses Hydrolysis of proteins to small peptides in the presence of ATP and magnesium. alpha-casein is the usual test substrate. In the absence of ATP, only oligopeptides shorter than five residues are hydrolyzed (such as succinyl-Leu-Tyr-|-NHMec, and Leu-Tyr-Leu-|-Tyr-Trp, in which cleavage of the -Tyr-|-Leu- and -Tyr-|-Trp bonds also occurs).. Its function is as follows. Cleaves peptides in various proteins in a process that requires ATP hydrolysis. Has a chymotrypsin-like activity. Plays a major role in the degradation of misfolded proteins. ClpXP2 is involved in the complete degradation of the Site-2 clipped anti-sigma-W factor RsiW. This results in the release of SigW and the transcription activation of the genes under the control of the sigma-W factor. This is ATP-dependent Clp protease proteolytic subunit 2 from Shouchella clausii (strain KSM-K16) (Alkalihalobacillus clausii).